Here is a 706-residue protein sequence, read N- to C-terminus: DNA ligase (706 aa).

NAD(+) is bound by residues 47-51 (DSEYD), 96-97 (SI), and E133. The active-site N6-AMP-lysine intermediate is the K135. The NAD(+) site is built by R156, E192, K323, and K347. Residues C441, C444, C459, and C465 each contribute to the Zn(2+) site. Residues 624–706 (VAPKPLSGKT…MRLLASAEAE (83 aa)) enclose the BRCT domain.

This sequence belongs to the NAD-dependent DNA ligase family. LigA subfamily. Mg(2+) is required as a cofactor. Requires Mn(2+) as cofactor.

It carries out the reaction NAD(+) + (deoxyribonucleotide)n-3'-hydroxyl + 5'-phospho-(deoxyribonucleotide)m = (deoxyribonucleotide)n+m + AMP + beta-nicotinamide D-nucleotide.. DNA ligase that catalyzes the formation of phosphodiester linkages between 5'-phosphoryl and 3'-hydroxyl groups in double-stranded DNA using NAD as a coenzyme and as the energy source for the reaction. It is essential for DNA replication and repair of damaged DNA. The chain is DNA ligase from Polaromonas sp. (strain JS666 / ATCC BAA-500).